The following is a 609-amino-acid chain: Pescadillo homolog (609 aa).

Positions 320 to 413 (KLKNLFKGLK…KLLPTNKYFI (94 aa)) constitute a BRCT domain. Disordered regions lie at residues 443 to 462 (DEFEKQERAEGISDDEDEDF) and 488 to 609 (ALNS…EILA). 2 stretches are compositionally biased toward basic and acidic residues: residues 444-453 (EFEKQERAEG) and 488-498 (ALNSGEAKKEQ). Residues 481–509 (FREEKAEALNSGEAKKEQAEEDNEDDDQE) adopt a coiled-coil conformation. The segment covering 499–512 (AEEDNEDDDQEPDQ) has biased composition (acidic residues). Basic and acidic residues-rich tracts occupy residues 513 to 524 (DETKKQRSEKKQ) and 533 to 552 (VFKENPKEQKQLTKQEEALR). Residues 539-607 (KEQKQLTKQE…QKRKAQRKEI (69 aa)) adopt a coiled-coil conformation. A compositionally biased stretch (basic residues) spans 554 to 564 (KMVKSRHKKLY). Residues 567-609 (LLDKQKKATKEANLLREKRQQIDKQKRKEQTQKRKAQRKEILA) show a composition bias toward basic and acidic residues.

Belongs to the pescadillo family.

The protein resides in the nucleus. It localises to the nucleolus. Its subcellular location is the nucleoplasm. Its function is as follows. Required for maturation of ribosomal RNAs and formation of the large ribosomal subunit. The sequence is that of Pescadillo homolog from Aedes aegypti (Yellowfever mosquito).